The chain runs to 607 residues: UvrABC system protein C (607 aa).

Positions 15–94 (ENPGVYLMKN…IKRHRPYFNV (80 aa)) constitute a GIY-YIG domain. The UVR domain occupies 204–239 (DQVLKLLIRLMNEASARLDYETAALRRDQIASIKEV).

Belongs to the UvrC family. Interacts with UvrB in an incision complex.

Its subcellular location is the cytoplasm. The UvrABC repair system catalyzes the recognition and processing of DNA lesions. UvrC both incises the 5' and 3' sides of the lesion. The N-terminal half is responsible for the 3' incision and the C-terminal half is responsible for the 5' incision. The chain is UvrABC system protein C from Dehalococcoides mccartyi (strain CBDB1).